Here is a 506-residue protein sequence, read N- to C-terminus: Cytochrome P450 6a2 (506 aa).

Residue C451 participates in heme binding.

This sequence belongs to the cytochrome P450 family. Requires heme as cofactor.

The protein resides in the endoplasmic reticulum membrane. The protein localises to the microsome membrane. Is involved in the breakdown of synthetic insecticides and may be involved in the metabolism of insect hormones. This is Cytochrome P450 6a2 (Cyp6a2) from Drosophila melanogaster (Fruit fly).